A 218-amino-acid chain; its full sequence is MGQKINPLGFRLGTTQSHDSIWFAQPTNYSENLKEDKKIRDCIKTYIQKTIKISSGVEGIGRIKIQKRIDLIQVIIYMGFPKLLIDGKPRRIEELQINVQKKMNYVNRKLNIAITRIANAYRDPNILAEFIAGQLKNRVSFRKAMKKAIELTEQAGTKGVQVQIAGRIDGKEIARVEWIREGRVPLQTIRAKIDYCSYTVRTIYGVLGIKVWIFLNKE.

Positions 47–118 constitute a KH type-2 domain; sequence IQKTIKISSG…KLNIAITRIA (72 aa).

The protein belongs to the universal ribosomal protein uS3 family. Part of the 30S ribosomal subunit.

The protein resides in the plastid. The protein localises to the chloroplast. This is Small ribosomal subunit protein uS3c (rps3) from Lotus japonicus (Lotus corniculatus var. japonicus).